Here is a 204-residue protein sequence, read N- to C-terminus: dITP/XTP pyrophosphatase (204 aa).

A substrate-binding site is contributed by 8–13; it reads SNNAHK. 2 residues coordinate Mg(2+): Glu-41 and Asp-76. The active-site Proton acceptor is Asp-76. Substrate-binding positions include Ser-77, 159-162, Lys-182, and 187-188; these read FGYD and HR.

This sequence belongs to the HAM1 NTPase family. In terms of assembly, homodimer. Requires Mg(2+) as cofactor.

The enzyme catalyses XTP + H2O = XMP + diphosphate + H(+). It carries out the reaction dITP + H2O = dIMP + diphosphate + H(+). The catalysed reaction is ITP + H2O = IMP + diphosphate + H(+). Its function is as follows. Pyrophosphatase that catalyzes the hydrolysis of nucleoside triphosphates to their monophosphate derivatives, with a high preference for the non-canonical purine nucleotides XTP (xanthosine triphosphate), dITP (deoxyinosine triphosphate) and ITP. Seems to function as a house-cleaning enzyme that removes non-canonical purine nucleotides from the nucleotide pool, thus preventing their incorporation into DNA/RNA and avoiding chromosomal lesions. This chain is dITP/XTP pyrophosphatase, found in Clostridium perfringens (strain 13 / Type A).